Here is a 297-residue protein sequence, read N- to C-terminus: N-acetylmuramic acid 6-phosphate etherase (297 aa).

The 164-residue stretch at 55-218 (AAAALKSGGR…STGAMVKFGK (164 aa)) folds into the SIS domain. Glu83 functions as the Proton donor in the catalytic mechanism. Glu114 is a catalytic residue.

It belongs to the GCKR-like family. MurNAc-6-P etherase subfamily. Homodimer.

It catalyses the reaction N-acetyl-D-muramate 6-phosphate + H2O = N-acetyl-D-glucosamine 6-phosphate + (R)-lactate. Its pathway is amino-sugar metabolism; 1,6-anhydro-N-acetylmuramate degradation. The protein operates within amino-sugar metabolism; N-acetylmuramate degradation. It participates in cell wall biogenesis; peptidoglycan recycling. Specifically catalyzes the cleavage of the D-lactyl ether substituent of MurNAc 6-phosphate, producing GlcNAc 6-phosphate and D-lactate. Together with AnmK, is also required for the utilization of anhydro-N-acetylmuramic acid (anhMurNAc) either imported from the medium or derived from its own cell wall murein, and thus plays a role in cell wall recycling. The sequence is that of N-acetylmuramic acid 6-phosphate etherase from Salmonella schwarzengrund (strain CVM19633).